Reading from the N-terminus, the 2085-residue chain is Protein MLP1 homolog (2085 aa).

Coiled coils occupy residues 44 to 367 (KIRE…SHDG), 399 to 513 (KATQ…HVLI), 568 to 630 (YELQ…RMKS), 675 to 1205 (ANEA…KRTQ), 1232 to 1667 (LRRE…LQQE), and 1744 to 1799 (EIEA…AAKE). Residues 365-398 (HDGVPGSVPQTPRANGSLLARPSSPFGTPASLRG) form a disordered region. The disordered stretch occupies residues 934–953 (AERLRPLPTPRAPAAAEQPS). The short motif at 1159-1166 (ERRQRLEQ) is the Nuclear localization signal element. Over residues 1482–1503 (LATATEKNTSLQQQLAASSTEQ) the composition is skewed to polar residues. 2 disordered regions span residues 1482-1514 (LATA…AAPS) and 1567-1591 (SGGD…DEER). Residues 1504–1514 (PAAAPVSAAPS) are compositionally biased toward low complexity. The segment covering 1574–1584 (AETSVSAQPSA) has biased composition (polar residues). The disordered stretch occupies residues 1816 to 2085 (KPPAPAQAPA…GGGGGGGGNQ (270 aa)). Residues 1817–1827 (PPAPAQAPAPA) are compositionally biased toward pro residues. 3 stretches are compositionally biased toward low complexity: residues 1843-1858 (VAPA…QAPS), 1910-1974 (QAGQ…PVPA), and 1982-1994 (ARTA…AGPR). Positions 1995 to 2016 (GARGGRGGGFVGAGRGAGGAAG) are enriched in gly residues. Residues 2028–2040 (GGATATAAAAAAA) show a composition bias toward low complexity. Gly residues-rich tracts occupy residues 2041–2051 (GGAGGSAGAGN) and 2076–2085 (GGGGGGGGNQ).

The nuclear pore complex (NPC) constitutes the exclusive means of nucleocytoplasmic transport. NPCs allow the passive diffusion of ions and small molecules and the active, nuclear transport receptor-mediated bidirectional transport of macromolecules such as proteins, RNAs, ribonucleoparticles (RNPs), and ribosomal subunits across the nuclear envelope. The 55-60 MDa NPC is composed of at least 28 different subunits: AMO1, ELYS, GLE1, GLE2, MLP1, NDC1, NIC96, NSP1, NUP133, NUP145, NUP152, NUP159, NUP170, NUP188, NUP192, NUP37, NUP49, NUP53, NUP56, NUP57, NUP82, NUP84, NUP85, POM152, POM33, POM34, SEC13 and SEH1. Due to its 8-fold rotational symmetry, all subunits are present with 8 copies or multiples thereof.

The protein resides in the nucleus. Its function is as follows. Involved in the structural and functional organization of perinuclear chromatin. Associates with the nuclear pore complex and form filamentous structures along the nuclear periphery. The sequence is that of Protein MLP1 homolog (MLP1) from Chaetomium thermophilum (strain DSM 1495 / CBS 144.50 / IMI 039719) (Thermochaetoides thermophila).